A 442-amino-acid polypeptide reads, in one-letter code: F-box/FBD/LRR-repeat protein At3g14710 (442 aa).

The F-box domain occupies 26 to 73; that stretch reads DKFSSLLESVVSIILSQLPTAEAVSTSVLSKSWKNIWTNITDLHFDDT. 3 LRR repeats span residues 126–147, 151–172, and 173–194; these read NLQR…SLFP, SLVE…AILP, and NLKF…SKNL. The region spanning 370–414 is the FBD domain; sequence VESPDCVTTMLKVLQIRNFKPNRLQISVLRYVLDNAEILGSVILS.

This chain is F-box/FBD/LRR-repeat protein At3g14710, found in Arabidopsis thaliana (Mouse-ear cress).